A 238-amino-acid polypeptide reads, in one-letter code: MADS-box protein 04g005320 (238 aa).

The 61-residue stretch at 1-61 (MGRGKVELKR…GKLYEFCSTS (61 aa)) folds into the MADS-box domain. A K-box domain is found at 87-177 (SQNNYQEYMK…KTKLEENSVA (91 aa)).

Its subcellular location is the nucleus. Its function is as follows. Probable MADS-box transcription factor that functions with J2 and EJ2 in meristem maturation. The sequence is that of MADS-box protein 04g005320 from Solanum lycopersicum (Tomato).